Here is a 450-residue protein sequence, read N- to C-terminus: Signal recognition particle protein (450 aa).

GTP-binding positions include 107 to 114 (GLQGVGKT), 190 to 194 (DTAGR), and 248 to 251 (TKTD).

It belongs to the GTP-binding SRP family. SRP54 subfamily. As to quaternary structure, part of the signal recognition particle protein translocation system, which is composed of SRP and FtsY. SRP is a ribonucleoprotein composed of Ffh and a 4.5S RNA molecule.

It localises to the cytoplasm. It catalyses the reaction GTP + H2O = GDP + phosphate + H(+). Involved in targeting and insertion of nascent membrane proteins into the cytoplasmic membrane. Binds to the hydrophobic signal sequence of the ribosome-nascent chain (RNC) as it emerges from the ribosomes. The SRP-RNC complex is then targeted to the cytoplasmic membrane where it interacts with the SRP receptor FtsY. Interaction with FtsY leads to the transfer of the RNC complex to the Sec translocase for insertion into the membrane, the hydrolysis of GTP by both Ffh and FtsY, and the dissociation of the SRP-FtsY complex into the individual components. The protein is Signal recognition particle protein of Buchnera aphidicola subsp. Schizaphis graminum (strain Sg).